Reading from the N-terminus, the 389-residue chain is Phospho-N-acetylmuramoyl-pentapeptide-transferase (389 aa).

The next 10 helical transmembrane spans lie at 25 to 45 (RAVM…PWVI), 73 to 93 (TMGG…WADL), 97 to 117 (FIWI…VDDY), 134 to 154 (FFWQ…SVSE), 190 to 210 (VSYP…IVGS), 222 to 242 (GLVI…AYVM), 258 to 278 (GAGE…AFLW), 286 to 306 (VFMG…IAVI), 311 to 331 (IVLF…MLQV), and 366 to 386 (QVVV…LSSL).

The protein belongs to the glycosyltransferase 4 family. MraY subfamily. Requires Mg(2+) as cofactor.

Its subcellular location is the cell inner membrane. It carries out the reaction UDP-N-acetyl-alpha-D-muramoyl-L-alanyl-gamma-D-glutamyl-meso-2,6-diaminopimeloyl-D-alanyl-D-alanine + di-trans,octa-cis-undecaprenyl phosphate = di-trans,octa-cis-undecaprenyl diphospho-N-acetyl-alpha-D-muramoyl-L-alanyl-D-glutamyl-meso-2,6-diaminopimeloyl-D-alanyl-D-alanine + UMP. The protein operates within cell wall biogenesis; peptidoglycan biosynthesis. Its function is as follows. Catalyzes the initial step of the lipid cycle reactions in the biosynthesis of the cell wall peptidoglycan: transfers peptidoglycan precursor phospho-MurNAc-pentapeptide from UDP-MurNAc-pentapeptide onto the lipid carrier undecaprenyl phosphate, yielding undecaprenyl-pyrophosphoryl-MurNAc-pentapeptide, known as lipid I. This Polynucleobacter necessarius subsp. necessarius (strain STIR1) protein is Phospho-N-acetylmuramoyl-pentapeptide-transferase.